Here is a 229-residue protein sequence, read N- to C-terminus: uncharacterized protein (229 aa).

A disordered region spans residues 1–102 (MKLLGRKKSY…AASKAQITDR (102 aa)). Residues 73 to 94 (ARRKSLAPPKCHRAERRAKRAA) show a composition bias toward basic residues. The next 2 membrane-spanning stretches (helical) occupy residues 137 to 157 (LGLFTPSALVLLFITFGVPQL) and 159 to 179 (LYMSPAMLVLLSVMGIDGIIL).

It localises to the cell membrane. This is an uncharacterized protein from Mycobacterium leprae (strain TN).